A 424-amino-acid chain; its full sequence is UPF0229 protein ECA2349 (424 aa).

A disordered region spans residues 53–111 (SIPNADINEPMFHQGRGGHRHRVHPGNDHFVQNDKIERPQGGGGSGSGQGDASKDGEGD). Residues 77-90 (PGNDHFVQNDKIER) are compositionally biased toward basic and acidic residues. The segment covering 92-101 (QGGGGSGSGQ) has biased composition (gly residues).

The protein belongs to the UPF0229 family.

This is UPF0229 protein ECA2349 from Pectobacterium atrosepticum (strain SCRI 1043 / ATCC BAA-672) (Erwinia carotovora subsp. atroseptica).